The primary structure comprises 739 residues: NAD(P)H-quinone oxidoreductase subunit 5, chloroplastic (739 aa).

16 consecutive transmembrane segments (helical) span residues 9-29 (WIIP…LILF), 40-60 (WAFQ…YLSI), 89-109 (IDPL…MVLI), 125-145 (FAYM…SNLI), 147-167 (IYIF…FWFT), 185-205 (GDFG…SFEF), 219-239 (NEVN…GAVA), 258-278 (TPIS…FLVA), 286-306 (VIPY…LLGA), 327-347 (LGYM…FHLI), 354-374 (ALLF…VGYS), 396-416 (ITFL…CFWS), 425-445 (WLYS…TAFY), 543-563 (LFPI…GIPF), 602-622 (VVSV…YKPI), and 717-737 (SYLF…YLLF).

This sequence belongs to the complex I subunit 5 family. In terms of assembly, NDH is composed of at least 16 different subunits, 5 of which are encoded in the nucleus.

Its subcellular location is the plastid. It is found in the chloroplast thylakoid membrane. It carries out the reaction a plastoquinone + NADH + (n+1) H(+)(in) = a plastoquinol + NAD(+) + n H(+)(out). The catalysed reaction is a plastoquinone + NADPH + (n+1) H(+)(in) = a plastoquinol + NADP(+) + n H(+)(out). Its function is as follows. NDH shuttles electrons from NAD(P)H:plastoquinone, via FMN and iron-sulfur (Fe-S) centers, to quinones in the photosynthetic chain and possibly in a chloroplast respiratory chain. The immediate electron acceptor for the enzyme in this species is believed to be plastoquinone. Couples the redox reaction to proton translocation, and thus conserves the redox energy in a proton gradient. In Solanum tuberosum (Potato), this protein is NAD(P)H-quinone oxidoreductase subunit 5, chloroplastic (ndhF).